We begin with the raw amino-acid sequence, 68 residues long: Kasstasin (68 aa).

The N-terminal stretch at Met1–Ala20 is a signal peptide. The propeptide occupies Asp21–Glu44. Residues Asp22–Ala41 are disordered. Position 67 is a lysine amide (Lys67).

This sequence belongs to the frog skin active peptide (FSAP) family. Brevinin subfamily. As to expression, expressed by the skin dorsal glands.

Its subcellular location is the secreted. In terms of biological role, peptide with potent vasoconstrictor properties (EC50=25 pM). Has moderate antimicrobial activity against Gram-positive bacterium S.aureus (MIC=55 uM) and against Gram-negative bacterium E.coli (MIC=110 uM). Not active against fungus C.albicans. Has weak hemolytic activity against horse erythrocytes. The protein is Kasstasin of Phlyctimantis maculatus (Red-legged running frog).